Consider the following 93-residue polypeptide: DNA-directed RNA polymerase subunit Rpo11 (93 aa).

The protein belongs to the archaeal Rpo11/eukaryotic RPB11/RPC19 RNA polymerase subunit family. As to quaternary structure, part of the RNA polymerase complex.

Its subcellular location is the cytoplasm. The enzyme catalyses RNA(n) + a ribonucleoside 5'-triphosphate = RNA(n+1) + diphosphate. Functionally, DNA-dependent RNA polymerase (RNAP) catalyzes the transcription of DNA into RNA using the four ribonucleoside triphosphates as substrates. The protein is DNA-directed RNA polymerase subunit Rpo11 of Sulfurisphaera tokodaii (strain DSM 16993 / JCM 10545 / NBRC 100140 / 7) (Sulfolobus tokodaii).